The sequence spans 417 residues: Gamma-glutamyl phosphate reductase (417 aa).

It belongs to the gamma-glutamyl phosphate reductase family.

The protein resides in the cytoplasm. It catalyses the reaction L-glutamate 5-semialdehyde + phosphate + NADP(+) = L-glutamyl 5-phosphate + NADPH + H(+). It participates in amino-acid biosynthesis; L-proline biosynthesis; L-glutamate 5-semialdehyde from L-glutamate: step 2/2. Functionally, catalyzes the NADPH-dependent reduction of L-glutamate 5-phosphate into L-glutamate 5-semialdehyde and phosphate. The product spontaneously undergoes cyclization to form 1-pyrroline-5-carboxylate. This is Gamma-glutamyl phosphate reductase from Legionella pneumophila (strain Lens).